A 246-amino-acid chain; its full sequence is O-antigen export system ATP-binding protein RfbB (246 aa).

In terms of domain architecture, ABC transporter spans 22 to 246 (SGIKDLIFHP…IIELYKQAMA (225 aa)). 63–70 (GRNGAGKS) contributes to the ATP binding site.

Belongs to the ABC transporter superfamily.

It is found in the cell inner membrane. Functionally, may form an ATP-driven O-antigen export apparatus, in association with RfbA. The chain is O-antigen export system ATP-binding protein RfbB (rfbB) from Klebsiella pneumoniae.